Consider the following 183-residue polypeptide: Gamma-crystallin N (183 aa).

4 consecutive Beta/gamma crystallin 'Greek key' domains span residues 6–46, 47–89, 95–136, and 138–180; these read GKIT…RVES, GAWV…RPVG, FRID…KVYG, and GAWV…RRVL.

This sequence belongs to the beta/gamma-crystallin family. In terms of assembly, monomer. In terms of tissue distribution, primordially eye-specific. Present in lens nucleus. In the retina, expression in observed in the outer plexiform layer (containing photoreceptors axons and synapses) and photoreceptor outer segments (at protein level). Also detected in the auditory hindbrain where it is highly expressed in the medial nucleus of the trapezoid body, but also present in other nuclei of the superior olivary complex.

Crystallins are the dominant structural components of the vertebrate eye lens. Also plays an important role for integrity and function of auditory nuclei. The protein is Gamma-crystallin N of Mus musculus (Mouse).